The chain runs to 286 residues: Bifunctional protein FolD (286 aa).

NADP(+) is bound by residues Gly165 to Ser167, Ser190, and Val231.

This sequence belongs to the tetrahydrofolate dehydrogenase/cyclohydrolase family. In terms of assembly, homodimer.

The enzyme catalyses (6R)-5,10-methylene-5,6,7,8-tetrahydrofolate + NADP(+) = (6R)-5,10-methenyltetrahydrofolate + NADPH. It carries out the reaction (6R)-5,10-methenyltetrahydrofolate + H2O = (6R)-10-formyltetrahydrofolate + H(+). It functions in the pathway one-carbon metabolism; tetrahydrofolate interconversion. In terms of biological role, catalyzes the oxidation of 5,10-methylenetetrahydrofolate to 5,10-methenyltetrahydrofolate and then the hydrolysis of 5,10-methenyltetrahydrofolate to 10-formyltetrahydrofolate. In Bacillus cereus (strain ATCC 14579 / DSM 31 / CCUG 7414 / JCM 2152 / NBRC 15305 / NCIMB 9373 / NCTC 2599 / NRRL B-3711), this protein is Bifunctional protein FolD.